A 362-amino-acid chain; its full sequence is MHKSKRNPSFSSTLLDEIYNSIDPKTQKTQPYVGSVNTTTKKQSIVTRSVPDRKIHRDRFFGSVSSSSDSNSSIFSSSDTELTHGKKTTSSRPLCFGPSKTKPRKTEDKTLFHQNRATRVYDDYDYASDVPKFNRHDENWENTRNRRSVKSSGNQKKPKTPASPGGRIVNFLNSLFSNNSKQSNAVKSYPRKTSYDDSAYVRKTSNDYHSSTTTCSSASSFSRSCMNKGYEKSSGRIKRSVRFSPVNVIVPESFTSKEEDYFSNGNARKSVKKNVEDGGRRSVEEIAREFLRDYHKNHENSLVKTNGFEDYEDDDEDDDDDDVASDSSSDLFELDLVGNHHHHNVYGDELPVYETTFAGLIL.

Disordered stretches follow at residues 22–113 (IDPK…TLFH), 132–168 (KFNRHDENWENTRNRRSVKSSGNQKKPKTPASPGGRI), and 303–327 (VKTNGFEDYEDDDEDDDDDDVASDS). The segment covering 23–47 (DPKTQKTQPYVGSVNTTTKKQSIVT) has biased composition (polar residues). Residues 50 to 60 (VPDRKIHRDRF) show a composition bias toward basic and acidic residues. The span at 63–78 (SVSSSSDSNSSIFSSS) shows a compositional bias: low complexity. Basic and acidic residues predominate over residues 132–144 (KFNRHDENWENTR). Residues 309-324 (EDYEDDDEDDDDDDVA) show a composition bias toward acidic residues.

Belongs to the BIG GRAIN 1 (BG1) plant protein family.

The protein localises to the cell membrane. Its function is as follows. Involved in auxin transport. Regulator of the auxin signaling pathway. This chain is Protein BIG GRAIN 1-like D, found in Arabidopsis thaliana (Mouse-ear cress).